Here is an 827-residue protein sequence, read N- to C-terminus: Cadherin-17 (827 aa).

Residues methionine 1 to glycine 21 form the signal peptide. Topologically, residues glutamine 22–methionine 786 are extracellular. Cadherin domains follow at residues proline 29–glutamine 127, threonine 128–proline 243, valine 244–cysteine 339, leucine 340–phenylalanine 448, glutamate 449–phenylalanine 565, proline 566–leucine 666, and alanine 667–glycine 776. N-linked (GlcNAc...) asparagine glycans are attached at residues asparagine 148, asparagine 183, asparagine 249, asparagine 418, asparagine 545, asparagine 573, and asparagine 721. Residues alanine 787–isoleucine 807 form a helical membrane-spanning segment. Topologically, residues arginine 808–serine 827 are cytoplasmic.

As to expression, liver and intestine.

Its subcellular location is the cell membrane. Functionally, cadherins are calcium-dependent cell adhesion proteins. They preferentially interact with themselves in a homophilic manner in connecting cells; cadherins may thus contribute to the sorting of heterogeneous cell types. LI-cadherin may have a role in the morphological organization of liver and intestine. The chain is Cadherin-17 (Cdh17) from Rattus norvegicus (Rat).